The sequence spans 334 residues: Probable type II restriction enzyme HindVP (334 aa).

It catalyses the reaction Endonucleolytic cleavage of DNA to give specific double-stranded fragments with terminal 5'-phosphates.. In terms of biological role, a P subtype restriction enzyme that recognizes the double-stranded sequence 5'-GRCGYC-3'; the cleavage site is unknown. The polypeptide is Probable type II restriction enzyme HindVP (hindVRP) (Haemophilus influenzae (strain ATCC 51907 / DSM 11121 / KW20 / Rd)).